We begin with the raw amino-acid sequence, 472 residues long: Transcription factor TGAL1 (472 aa).

Residues 136-190 (WGESTIADTSPRTDTSTDPDTDERNQMFEQGQLAAPTASDSSDRSKDKLDHKTLR) are disordered. Residues 143–153 (DTSPRTDTSTD) show a composition bias toward low complexity. Basic and acidic residues predominate over residues 176–187 (SSDRSKDKLDHK). Residues 185-229 (DHKTLRRLAQNREAARKSRLRKKAYIQNLESSRLKLTQIEQELQR) enclose the bZIP domain. Residues 187–207 (KTLRRLAQNREAARKSRLRKK) are basic motif. Positions 213 to 227 (LESSRLKLTQIEQEL) are leucine-zipper. The region spanning 252-469 (ALAFDMEYAR…RALSSLWLAR (218 aa)) is the DOG1 domain.

Belongs to the bZIP family. As to quaternary structure, isoforms 1 and 2 interact with NPR2/NH2. Isoform 2 interacts with NPR1/NH1 and NPR3/NH3.

It localises to the nucleus. In terms of biological role, transcriptional regulator involved in defense response. The sequence is that of Transcription factor TGAL1 from Oryza sativa subsp. japonica (Rice).